Consider the following 1360-residue polypeptide: DNA-directed RNA polymerase subunit beta (1360 aa).

Belongs to the RNA polymerase beta chain family. In terms of assembly, the RNAP catalytic core consists of 2 alpha, 1 beta, 1 beta' and 1 omega subunit. When a sigma factor is associated with the core the holoenzyme is formed, which can initiate transcription.

It catalyses the reaction RNA(n) + a ribonucleoside 5'-triphosphate = RNA(n+1) + diphosphate. Functionally, DNA-dependent RNA polymerase catalyzes the transcription of DNA into RNA using the four ribonucleoside triphosphates as substrates. This chain is DNA-directed RNA polymerase subunit beta, found in Vesicomyosocius okutanii subsp. Calyptogena okutanii (strain HA).